The chain runs to 158 residues: Trafficking protein particle complex subunit 6B (158 aa).

This sequence belongs to the TRAPP small subunits family. BET3 subfamily. Homodimer. Part of a TRAPP complex. Heterodimer with TRAPPC3. The heterodimer TRAPPC6B-TRAPPC3 interacts with TRAPPC1 likely providing a core for TRAPP complex formation. Widely expressed. Expressed in lung, heart, liver, spleen, brain and kidney.

It localises to the golgi apparatus. Its subcellular location is the cis-Golgi network. It is found in the endoplasmic reticulum. Component of a transport protein particle (TRAPP) complex that may function in specific stages of inter-organelle traffic. Specifically involved in the early development of neural circuitry, likely by controlling the frequency and amplitude of intracellular calcium transients implicated in the regulation of neuron differentiation and survival. The polypeptide is Trafficking protein particle complex subunit 6B (Mus musculus (Mouse)).